A 289-amino-acid polypeptide reads, in one-letter code: RNA exonuclease 4 (289 aa).

Polar residues predominate over residues 1 to 24 (MALSSNWQALLASESNPTSNGKNK). The tract at residues 1-34 (MALSSNWQALLASESNPTSNGKNKQSNRKIRNVK) is disordered. Over residues 25 to 34 (QSNRKIRNVK) the composition is skewed to basic residues. The region spanning 121–273 (YIAMDCEFVG…EDARATMLLY (153 aa)) is the Exonuclease domain.

It belongs to the REXO4 family.

It localises to the nucleus. Its function is as follows. Exoribonuclease involved in ribosome biosynthesis. Involved in the processing of ITS1, the internal transcribed spacer localized between the 18S and 5.8S rRNAs. This chain is RNA exonuclease 4 (REX4), found in Saccharomyces cerevisiae (strain ATCC 204508 / S288c) (Baker's yeast).